Consider the following 571-residue polypeptide: MAKLWFKFQRCFRYFRRKPVRFFTLLAIYLTAGSLVFLHSGFVGQPAVPQSQASPAAGSPVEGAELPFLGDLHLGRGFRDTVEASSIARRYGPTFKGKDTSERAKLGDYGGAWSRALKGRVVREKEKEKEEEKAKYIGCYLDDTQSRALRGVSFFDYKKMTVFRCQDNCAERGYLYAGLEFGAECYCGHKIQAANVSESDCDMECKGERGSVCGGINRLSVYRLQLAQESARRYGSAVFRGCFRRPNNLSLALPVSAAMPNMSVDKCVDLCTEKEFPLAALAGTACHCGFPTTRFPLHDREDEQLCAQKCSAEEFESCGTPSYFIVYQTQVQDNRCMDRRFLPAKSKKLIALASFPGAGNTWARHLIELATGFYTGSYYFDGSLYNKGFKGERDHWRSGRTICIKTHESGQKEIEAFDAAILLIRNPYKALMAEFNRKYGGHIGFAAHAHWKGKEWPEFVRNYAPWWATHTLDWLKFGKTVLVVHFEDLKQDLFTQLGRMVSLLGVAVREDRLLCVESQKDGNFKRSGLRKLEYDPYTAEMRRTIAAYIRMVDTALRSRNLTGVPDAYGPR.

At 1–20 (MAKLWFKFQRCFRYFRRKPV) the chain is on the cytoplasmic side. Residues 21–43 (RFFTLLAIYLTAGSLVFLHSGFV) form a helical membrane-spanning segment. Residues 44–571 (GQPAVPQSQA…TGVPDAYGPR (528 aa)) lie on the Extracellular side of the membrane. WSC domains are found at residues 133-225 (KAKY…YRLQ) and 236-330 (SAVF…YQTQ). 2 N-linked (GlcNAc...) asparagine glycosylation sites follow: Asn-195 and Asn-248.

Belongs to the WSCD family.

The protein resides in the golgi apparatus membrane. Functionally, sialate:O-sulfotransferase that catalyzes 8-O-sulfation at the Sia-glycan level using 3'-phosphoadenosine 5'-phosphosulfate (PAPS) as a donor, forming 8-O-sulfated Sia (Sia8S)-glycans. Displays selectivity toward glycoproteins such as TF/transferrin. This chain is Sialate:O-sulfotransferase 2 (Wscd2), found in Mus musculus (Mouse).